The following is an 812-amino-acid chain: Valine--tRNA ligase (812 aa).

A 'HIGH' region motif is present at residues 46-56; that stretch reads PTVSGQLHIGH. Positions 536-540 match the 'KMSKS' region motif; the sequence is KMSKS. Lysine 539 is an ATP binding site.

Belongs to the class-I aminoacyl-tRNA synthetase family. ValS type 2 subfamily. As to quaternary structure, monomer.

Its subcellular location is the cytoplasm. The catalysed reaction is tRNA(Val) + L-valine + ATP = L-valyl-tRNA(Val) + AMP + diphosphate. Its function is as follows. Catalyzes the attachment of valine to tRNA(Val). As ValRS can inadvertently accommodate and process structurally similar amino acids such as threonine, to avoid such errors, it has a 'posttransfer' editing activity that hydrolyzes mischarged Thr-tRNA(Val) in a tRNA-dependent manner. In Rickettsia rickettsii (strain Iowa), this protein is Valine--tRNA ligase.